We begin with the raw amino-acid sequence, 1356 residues long: DNA-directed RNA polymerase subunit beta (1356 aa).

Belongs to the RNA polymerase beta chain family. The RNAP catalytic core consists of 2 alpha, 1 beta, 1 beta' and 1 omega subunit. When a sigma factor is associated with the core the holoenzyme is formed, which can initiate transcription.

The catalysed reaction is RNA(n) + a ribonucleoside 5'-triphosphate = RNA(n+1) + diphosphate. DNA-dependent RNA polymerase catalyzes the transcription of DNA into RNA using the four ribonucleoside triphosphates as substrates. This chain is DNA-directed RNA polymerase subunit beta, found in Phenylobacterium zucineum (strain HLK1).